We begin with the raw amino-acid sequence, 419 residues long: Squalene synthase R6 (419 aa).

The chain crosses the membrane as a helical span at residues 397–417 (TMYLVVLLLGILGVAAAVLMA).

Belongs to the phytoene/squalene synthase family. Mg(2+) is required as a cofactor.

Its subcellular location is the membrane. It carries out the reaction 2 (2E,6E)-farnesyl diphosphate + NADPH + H(+) = squalene + 2 diphosphate + NADP(+). It catalyses the reaction 2 (2E,6E)-farnesyl diphosphate + NADH + H(+) = squalene + 2 diphosphate + NAD(+). The protein operates within terpene metabolism; lanosterol biosynthesis; lanosterol from farnesyl diphosphate: step 1/3. Functionally, squalene synthase; part of the gene cluster that mediates the biosynthesis of squalestatin S1 (SQS1, also known as zaragozic acid A), a heavily oxidized fungal polyketide that offers potent cholesterol lowering activity by targeting squalene synthase (SS). Catalyzes the condensation of 2 two farnesyl pyrophosphate moieties to form squalene. The presence of a gene encoding a squalene synthase supports the identification of the cluster as being responsible for SQS1 production and suggests a likely mechanism for self-resistance. The polypeptide is Squalene synthase R6 (Phoma sp. (strain ATCC 20986 / MF5453)).